The sequence spans 319 residues: MASKRKHQASQKVKEESFKKHTLDSDEEDSDDYEREYLNDSDIEGGEEGVAKVEDDVKVTPFNMKEELEEGHFDKDGHYHWNKETEAKDNWLDNIDWVKIGTQKNAFDPAKDEENSSDEEKNEPVGKAFNLSMNLMKMVEFMKPGETVKMTLQRLGKQRPVLTTLQRIKQKKAGIVDPKTQEISQLTELANEILSKTGNMDIYQDTYESIKAKIADLPGTSKPKVADDIDMYADDFETKELERSKTSSSDSSKPTTTTSEVTWEFKWSQDETDIQGPFSTEKMLKWSQENYFKNGVYVRKCGENTNFYTSNRIDFDLYL.

2 disordered regions span residues 1–57 (MASK…EDDV) and 105–124 (NAFD…KNEP). Residues 12 to 24 (KVKEESFKKHTLD) are compositionally biased toward basic and acidic residues. Serine 25 and serine 30 each carry phosphoserine. Over residues 25–47 (SDEEDSDDYEREYLNDSDIEGGE) the composition is skewed to acidic residues. Residue tyrosine 37 is modified to Phosphotyrosine. Serine 41 carries the phosphoserine modification. Residues 109–124 (PAKDEENSSDEEKNEP) are compositionally biased toward basic and acidic residues. Residues 260 to 316 (EVTWEFKWSQDETDIQGPFSTEKMLKWSQENYFKNGVYVRKCGENTNFYTSNRIDFD) enclose the GYF domain.

It is found in the nucleus. Functionally, required for embryonic epithelial tissue repair, but not for the assembly of the actomyosin cable at the wound edge. Probably acts downstream of rl in the regulation of Ddc and msn transcription to promote wound healing. This Drosophila melanogaster (Fruit fly) protein is CD2 antigen cytoplasmic tail-binding protein 2 homolog (holn1).